We begin with the raw amino-acid sequence, 392 residues long: MVSELVSMYVPPIVEAAKAVTPWQAAAGVTAAIFIGSYLWHSASLRKQRRTGTADGGLFSLTAGGIKKQDVTKLVDSFSQAYKTEDDGQLTCHHITREQSVEMVNTFYDLITDLYEWAWDTSFHFSCRPRWANFAQAQVLHEWRIANLANIQPGMKVLDVGTGVGNPGRTIASLSGAQVTGVTINAYQVKRALHHTRKAKLEDFYKPVQADFTDTPFEDDTFDAAFAIEATCHAPKLEQVYKEVYRVLKPGAYFALYDGVTKPNFDPKNERHVQLMNATVIGNGCPDMRTWKECEEIGKEVGFKLHMSYDAGEASRVLHPWWEKLDNFINTGFAWYGPASIKLLSKIGFLPRDFTKFIDIAAASVFSVKEAGELGIFTPMYVFVWQKPEKTA.

Residues 20–42 (VTPWQAAAGVTAAIFIGSYLWHS) traverse the membrane as a helical segment.

This sequence belongs to the class I-like SAM-binding methyltransferase superfamily. Erg6/SMT family.

It is found in the microsome membrane. Functionally, unable to convert squalene, botryococcene, cycloartenol, zymosterol or lanosterol to mono-, di-, tri- or tetramethylated derivatives. The sequence is that of Sterol methyltransferase-like 3 (SMT-3) from Botryococcus braunii (Green alga).